A 418-amino-acid polypeptide reads, in one-letter code: FAD-dependent monooxygenase fmqB (418 aa).

Positions 12 and 68 each coordinate FAD. Arg-147 is a catalytic residue. Residues Asp-272 and Gly-285 each coordinate FAD.

Belongs to the paxM FAD-dependent monooxygenase family.

Its subcellular location is the cytoplasm. It functions in the pathway alkaloid biosynthesis. In terms of biological role, FAD-dependent monooxygenase; part of the gene cluster that mediates the biosynthesis of the antitumor fumiquinazolines that confer a dual-usage capability to defend against phagocytes in the environment and animal hosts. The simplest member is fumiquinazoline F (FQF) with a 6-6-6 tricyclic core derived from anthranilic acid (Ant), tryptophan (Trp), and alanine (Ala). The trimodular NRPS fmqA is responsible for FQF formation. Modules 1, 2 and 3 of fmqA are predicted to activate and load Ant, Trp and Ala, respectively, providing for the assembly of an Ant-Trp-Ala-S-enzyme intermediate that would undergo double cyclization for chain release and generation of the tricyclic 6-6-6 product fumiquinazoline F. The presence of an E domain predicted for module 2 of fmqA is consistent with epimerization of L-Trp to D-Trp during assembly to generate the R-stereocenter at C14 of FQF. The FAD-dependent monooxygenase fmqB and the monomodular NRPS fmqC then maturate FQF to FQA. FmqB oxidizes the 2',3'-double bond of the indole side chain of FQF, and fmqC activates L-Ala as the adenylate, installs it as the pantetheinyl thioester on its carrier protein domain, and acylates the oxidized indole for subsequent intramolecular cyclization to create the 6-5-5-imidazolindolone of FQA. The FAD-linked oxidoreductase fmqD introduces a third layer of scaffold complexity by converting FQA to the spirohemiaminal FQC, presumably by catalyzing the formation of a transient imine within the pyrazinone ring. FQC subsequently converts nonenzymatically to the known cyclic aminal FQD. In Aspergillus fumigatus (strain ATCC MYA-4609 / CBS 101355 / FGSC A1100 / Af293) (Neosartorya fumigata), this protein is FAD-dependent monooxygenase fmqB.